Reading from the N-terminus, the 477-residue chain is Iroquois homeobox protein 6a (477 aa).

The segment at residues 148 to 210 is a DNA-binding region (homeobox); that stretch reads GSTRRKNATR…NARRRLKKEN (63 aa). Disordered regions lie at residues 209–282 and 303–323; these read ENKM…PDIP and DYLDHLGSKPQQQQPSPQSTS. The segment covering 219–237 has biased composition (basic and acidic residues); that stretch reads KAGDDRKEDLDSKDSKDEQ. Positions 243-253 are enriched in acidic residues; that stretch reads DLDDMEDEDCD. Over residues 254–264 the composition is skewed to basic and acidic residues; it reads KLDSDCEKSGQ. The segment covering 310 to 321 has biased composition (low complexity); sequence SKPQQQQPSPQS.

It belongs to the TALE/IRO homeobox family.

The protein localises to the nucleus. Transcription factor. Binds to the iroquois binding site (IBS) motif of target genes to regulate gene expression; functions as a transcriptional activator or repressor. In concert with irx5a, plays a role in visual performance. The polypeptide is Iroquois homeobox protein 6a (Danio rerio (Zebrafish)).